Consider the following 770-residue polypeptide: Rho guanine nucleotide exchange factor 38 (770 aa).

The interval 33–88 (KTDTVVDSSVSGDHSGSLRRSQSDRTEYNQKLQEKMTPQAECSSAETPTPEDEQQV) is disordered. Threonine 34 is modified (phosphothreonine). The span at 37 to 47 (VVDSSVSGDHS) shows a compositional bias: low complexity. Residues 53-66 (SQSDRTEYNQKLQE) show a composition bias toward basic and acidic residues. The region spanning 94-285 (KRAKIIRELI…KDINVNINEL (192 aa)) is the DH domain. A BAR domain is found at 327–542 (LKILTRGESQ…VHSLTFVKEN (216 aa)). 2 consecutive SH3 domains span residues 581 to 644 (GAEE…PHNP) and 706 to 769 (VDEQ…KMTY).

Functionally, may act as a guanine-nucleotide releasing factor. This chain is Rho guanine nucleotide exchange factor 38 (Arhgef38), found in Mus musculus (Mouse).